A 388-amino-acid polypeptide reads, in one-letter code: Interferon alpha/beta receptor 1b (388 aa).

Fibronectin type-III domains lie at 5-102 (LPQP…FCPD) and 109-211 (PPSR…TEGD). The helical transmembrane segment at 217–237 (IFLYFLVSMMVCFLLVLLSSY) threads the bilayer. The segment at 308–357 (TAPPSELEQDSGRHIRQDSGDSGIYSTEGGSAQQGRSGGEPIRRDQEVDS) is disordered. The span at 317 to 326 (DSGRHIRQDS) shows a compositional bias: basic and acidic residues. Positions 331 to 342 (IYSTEGGSAQQG) are enriched in polar residues.

Belongs to the type II cytokine receptor family. Heterodimer with IFNAR2; forming the receptor for type I interferon.

Its subcellular location is the cell membrane. It is found in the cytoplasm. The protein resides in the perinuclear region. In terms of biological role, together with IFNAR2, forms the heterodimeric receptor for type I interferons (including interferons alpha, beta, epsilon, omega and kappa). Type I interferon binding activates the JAK-STAT signaling cascade, resulting in transcriptional activation or repression of interferon-regulated genes that encode the effectors of the interferon response. Mechanistically, type I interferon-binding brings the IFNAR1 and IFNAR2 subunits into close proximity with one another, driving their associated Janus kinases (JAKs) (TYK2 bound to IFNAR1 and JAK1 bound to IFNAR2) to cross-phosphorylate one another. The activated kinases phosphorylate specific tyrosine residues on the intracellular domains of IFNAR1 and IFNAR2, forming docking sites for the STAT transcription factors. STAT proteins are then phosphorylated by the JAKs, promoting their translocation into the nucleus to regulate expression of interferon-regulated genes. The sequence is that of Interferon alpha/beta receptor 1b from Oncorhynchus mykiss (Rainbow trout).